The sequence spans 126 residues: Glycine cleavage system H protein (126 aa).

Residues 23 to 104 enclose the Lipoyl-binding domain; that stretch reads TLTVGITDHA…PYDNWLFKIK (82 aa). Position 64 is an N6-lipoyllysine (Lys-64).

The protein belongs to the GcvH family. As to quaternary structure, the glycine cleavage system is composed of four proteins: P, T, L and H. (R)-lipoate is required as a cofactor.

The glycine cleavage system catalyzes the degradation of glycine. The H protein shuttles the methylamine group of glycine from the P protein to the T protein. The sequence is that of Glycine cleavage system H protein from Paraburkholderia phymatum (strain DSM 17167 / CIP 108236 / LMG 21445 / STM815) (Burkholderia phymatum).